A 319-amino-acid polypeptide reads, in one-letter code: MEVERLDYTDFLNEAPGRQEAFVQHLYAALSRVGFAKITNHPIPESVILQLFAWTKGFFTLPLEHKRKAAHPPQPNPHRGWSCIGQEKLSVIAQGKAVLDLKESFDMGPGDDELYPNIWTDEGDLPGFRAFMEDFYGRCQSLHLQLLSAIARSMQLPDSYFAPLCSQNSSELRLNHYPAVSRHDLTTGTMRISSHTDFGTITLLFQDSVGGLEVEDQTRPGHYMPVAADDCTDIIVNVGDCLQRWTNDRLRSANHRVTLPRGLTHGMVDDRYSIAYFGKPSRDVSVRTLSALLRANEEAKYREEMTAWQYNQSRLLQTY.

The 113-residue stretch at 168-280 (NSSELRLNHY…RYSIAYFGKP (113 aa)) folds into the Fe2OG dioxygenase domain. Positions 195, 197, and 255 each coordinate Fe cation. 2-oxoglutarate is bound at residue Arg271.

The protein belongs to the iron/ascorbate-dependent oxidoreductase family. Requires Fe(2+) as cofactor.

It participates in mycotoxin biosynthesis. Proline hydroxylase; part of the gene cluster that mediates the biosynthesis of burnettramic acids, an unusual class of bolaamphiphilic pyrrolizidinediones that display potent antibacterial, antifungal, and cytotoxic activities. The first step of the biosynthesis of burnettramic acids is the hydroxylation of proline by the proline hydroxylase buaE to generate 4-hydroxyproline. The PKS-NRPS buaA and trans-enoyl reductase buaC construct the highly reduced polyketide chain, and the condensation (C) domain of buaA then catalyzes the amide bond formation with the activated 4-hydroxyproline. This is followed by the R domain releasing the nascent polyketide-peptide directly via a Dieckmann condensation to afford a tetramic acid fused to the hydroxyproline, generating the bicyclic pyrrolidinedione moiety. The cytochrome P450 monooxygenases buaD and buaG are likely responsible for the multiple hydroxylations on the polyketide chain and its terminus, although in the heterologous context, buaD does not appear to be required. Therefore, while buaG may be a multifunctional cytochrome P450 monooxygenase, it cannot be ruled out that the two secondary alcohols on the polyketide chain could have an acetate origin. Finally, the glycosyltransferase buaB transfers beta-D-mannose to the aglycone burnettramic acid A to form burnettramic acid A. Burnettramic acid B is a minor cis-pyrrolizidine epimer of burnettramic acid A and it is likely that small amounts of it form naturally in acidic environments. The sequence is that of Proline hydroxylase buaE from Petromyces alliaceus (Aspergillus alliaceus).